Here is a 206-residue protein sequence, read N- to C-terminus: MNSEYDYLFKLLLIGNSGVGKSCLLLRFSDDTYTNDYISTIGVDFKIKTVELDGKTVKLQIWDTAGQERFRTITSSYYRGSHGIIIVYDVTDQESFNGVKMWLQEIDRYATSTVLKLLVGNKCDLKDKRVVEYDVAKEFADANKMPFLETSALDSTNVEDAFLTMARQIKESMSQQNLNETTQKKEDKGNVNLKGQSLTNTGGGCC.

An N-acetylmethionine modification is found at Met-1. GTP-binding positions include 17–23 (SGVGKSC), 33–40 (YTNDYIST), Gly-66, and 121–124 (NKCD). Residue Cys-23 is the site of S-palmitoyl cysteine attachment. Positions 37–45 (YISTIGVDF) match the Effector region motif. The interaction with GDI1 stretch occupies residues 63–80 (DTAGQERFRTITSSYYRG). A lipid anchor (S-palmitoyl cysteine) is attached at Cys-123. Lys-144 is covalently cross-linked (Glycyl lysine isopeptide (Lys-Gly) (interchain with G-Cter in ubiquitin)). Residue 152 to 153 (AL) participates in GTP binding. Phosphoserine is present on residues Ser-172 and Ser-174. The disordered stretch occupies residues 173–206 (MSQQNLNETTQKKEDKGNVNLKGQSLTNTGGGCC). The interaction with GDI1 stretch occupies residues 189-195 (GNVNLKG). 2 S-geranylgeranyl cysteine lipidation sites follow: Cys-205 and Cys-206.

The protein belongs to the small GTPase superfamily. Rab family. As to quaternary structure, forms a complex with the Rab escort protein (REP) MRS6, which is recognized by Rab geranylgeranyltransferase BET2-BET4. Interacts with the Rab GDP dissociation inhibitor GDI1, which can retrieve from and deliver to membranes the GDP-bound and prenylated form of YPT1. Interacts with YIP1, which is required for proper membrane targeting of prenylated YPT1. Interacts with YIF1, YIP3, YIP4 and YIP5. In terms of processing, prenylation is required for interaction with GDI1 and YIP1.

It is found in the endoplasmic reticulum membrane. The protein localises to the golgi apparatus membrane. It localises to the cytoplasm. Its subcellular location is the preautophagosomal structure membrane. Rab activation is generally mediated by a guanine exchange factor (GEF), while inactivation through hydrolysis of bound GTP is catalyzed by a GTPase activating protein (GAP). YPT1 is activated by the GEFs DSS4 and TRAPP complex, and inactivated by GAPs GYP1, GYP5 and GYP8. In terms of biological role, the small GTPases Rab are key regulators of intracellular membrane trafficking, from the formation of transport vesicles to their fusion with membranes. Rabs cycle between an inactive GDP-bound form and an active GTP-bound form that is able to recruit to membranes different set of downstream effectors directly responsible for vesicle formation, movement, tethering and fusion. YPT1 regulates the trafficking of secretory vesicles from the endoplasmic reticulum (ER) to the Golgi. Vesicular transport depends on shuttling of YPT1 between membrane and cytosol by GDI1, probably by recycling it to its membrane of origin after a vesicle fusion event. Plays a role in the initial events of the autophagic vacuole development which take place at specialized regions of the endoplasmic reticulum. Also involved in the recycling of membrane proteins. The chain is GTP-binding protein YPT1 (YPT1) from Saccharomyces cerevisiae (strain ATCC 204508 / S288c) (Baker's yeast).